A 173-amino-acid polypeptide reads, in one-letter code: Alpha-crystallin A chain (173 aa).

Methionine 1 is subject to N-acetylmethionine. The tract at residues 1-63 is required for complex formation with BFSP1 and BFSP2; that stretch reads MDIAIQHPWF…RSVLDSGVSE (63 aa). Glutamine 6 carries the deamidated glutamine; partial modification. Position 45 is a phosphoserine (serine 45). At glutamine 50 the chain carries Deamidated glutamine; partial. The 111-residue stretch at 52–162 folds into the sHSP domain; it reads LFRSVLDSGV…GHSERAIPVS (111 aa). Residue lysine 70 is modified to N6-acetyllysine. At glutamine 90 the chain carries Deamidated glutamine; partial. N6-acetyllysine is present on lysine 99. Histidine 100 contacts Zn(2+). At asparagine 101 the chain carries Deamidated asparagine; partial. Zn(2+)-binding residues include glutamate 102 and histidine 107. Serine 122 is subject to Phosphoserine. Asparagine 123 carries the post-translational modification Deamidated asparagine; partial. Residues 144–173 are disordered; the sequence is PKIPSGMDAGHSERAIPVSREEKPSSAPSS. A compositionally biased stretch (basic and acidic residues) spans 153–167; the sequence is GHSERAIPVSREEKP. Position 154 (histidine 154) interacts with Zn(2+). Serine 162 is a glycosylation site (O-linked (GlcNAc) serine).

Belongs to the small heat shock protein (HSP20) family. Heteromer composed of three CRYAA and one CRYAB subunits. Inter-subunit bridging via zinc ions enhances stability, which is crucial as there is no protein turn over in the lens. Can also form homodimers and homotetramers (dimers of dimers) which serve as the building blocks of homooligomers. Within homooligomers, the zinc-binding motif is created from residues of 3 different molecules. His-100 and Glu-102 from one molecule are ligands of the zinc ion, and His-107 and His-154 residues from additional molecules complete the site with tetrahedral coordination geometry. Part of a complex required for lens intermediate filament formation composed of BFSP1, BFSP2 and CRYAA. In terms of processing, acetylation at Lys-70 may increase chaperone activity. Undergoes age-dependent proteolytical cleavage at the C-terminus.

The protein resides in the cytoplasm. Its subcellular location is the nucleus. Its function is as follows. Contributes to the transparency and refractive index of the lens. Acts as a chaperone, preventing aggregation of various proteins under a wide range of stress conditions. Required for the correct formation of lens intermediate filaments as part of a complex composed of BFSP1, BFSP2 and CRYAA. This chain is Alpha-crystallin A chain (CRYAA), found in Ceratotherium simum (White rhinoceros).